Consider the following 602-residue polypeptide: Adenylosuccinate synthetase (602 aa).

GTP-binding positions include 74–80 (GDEGKGK) and 104–106 (GHT). D75 (proton acceptor) is an active-site residue. Mg(2+) is bound by residues D75 and G104. IMP is bound by residues 75–78 (DEGK), 102–105 (NAGH), T189, K203, Q315, T331, and K459. The Proton donor role is filled by H105. 455-461 (AVTKKPR) serves as a coordination point for substrate. Residues R461 and 589 to 591 (GNG) each bind GTP.

It belongs to the adenylosuccinate synthetase family. As to quaternary structure, homodimer. Mg(2+) is required as a cofactor.

Its subcellular location is the cytoplasm. The enzyme catalyses IMP + L-aspartate + GTP = N(6)-(1,2-dicarboxyethyl)-AMP + GDP + phosphate + 2 H(+). The protein operates within purine metabolism; AMP biosynthesis via de novo pathway; AMP from IMP: step 1/2. Its function is as follows. Plays an important role in the salvage pathway for purine nucleotide biosynthesis. Catalyzes the first committed step in the biosynthesis of AMP from IMP. The sequence is that of Adenylosuccinate synthetase from Trypanosoma brucei gambiense (strain MHOM/CI/86/DAL972).